We begin with the raw amino-acid sequence, 489 residues long: Protein LMBR1L (489 aa).

Over 1-21 (MEAADYEVLSVREQLFHDRVR) the chain is Extracellular. The interaction with LGB stretch occupies residues 1 to 59 (MEAADYEVLSVREQLFHDRVRECIISILLFATLYILCHIFLTRFKKPAEFTTVDDEDAT). Residues 1–76 (MEAADYEVLS…LCTFTLAVAL (76 aa)) are LCN1-binding. Residues 22-42 (ECIISILLFATLYILCHIFLT) form a helical membrane-spanning segment. Residues 43–66 (RFKKPAEFTTVDDEDATVNKIALE) are Cytoplasmic-facing. The chain crosses the membrane as a helical span at residues 67–87 (LCTFTLAVALGAVLLLPFSII). At 88-114 (SNEVLLSLPRNYYIQWLNGSLIHGLWN) the chain is on the extracellular side. The helical transmembrane segment at 115–135 (LVFLFSNLSLVFLMPFAYFFT) threads the bilayer. The Cytoplasmic portion of the chain corresponds to 136 to 154 (ESEGFAGSRKGVLGRVYET). Residues 155-175 (VVMLILLTLLVLGMVWVASAI) traverse the membrane as a helical segment. The Extracellular segment spans residues 176-196 (VDNDKASRESLYDFWEYYLPY). A helical transmembrane segment spans residues 197–217 (LYSCISFLGVLLLLVCTPLGL). At 218–305 (ARMFSVTGKL…NLGYPLAMLC (88 aa)) the chain is on the cytoplasmic side. Residues 306–326 (LLVLTGLSVLIVAVHILELLI) form a helical membrane-spanning segment. At 327 to 350 (DEAAMPRGMQDAALGQASFSKLGS) the chain is on the extracellular side. Residues 351 to 371 (FGAIIQVVLIFYLMVSSVVGF) traverse the membrane as a helical segment. The Cytoplasmic segment spans residues 372–388 (YSSPLFGSLRPRWHDTS). A helical membrane pass occupies residues 389-409 (MTQIIGNCVCLLVLSSALPVF). Residues 410-431 (SRTLGLTRFDLLGDFGRFNWLG) lie on the Extracellular side of the membrane. The helical transmembrane segment at 432–452 (NFYIVFLYNAAFAGLTTLCLV) threads the bilayer. Topologically, residues 453 to 489 (KTFTAAVRAELIRAFGLDRLPLPVSGFPRASRKKQHQ) are cytoplasmic.

This sequence belongs to the LIMR family. In terms of assembly, dimer. Can also form higher oligomers. Interacts with LCN1; this interaction mediates the endocytosis of LCN1. Interacts with UBAC2, FAF2, VCP, AMFR, ZNRF3, CTNNB1, LRP6, GSK3B, FZD6, DVL2 and RNF43. Interacts with GSK3A. Interaction with LGB and SCGB1A1 is controversial. As to expression, highly expressed in the bone marrow, thymus, spleen and lymphocytes.

The protein localises to the cell membrane. Its subcellular location is the endoplasmic reticulum membrane. Plays an essential role in lymphocyte development by negatively regulating the canonical Wnt signaling pathway. In association with UBAC2 and E3 ubiquitin-protein ligase AMFR, promotes the ubiquitin-mediated degradation of CTNNB1 and Wnt receptors FZD6 and LRP6. LMBR1L stabilizes the beta-catenin destruction complex that is required for regulating CTNNB1 levels. Acts as a LCN1 receptor and can mediate its endocytosis. This Mus musculus (Mouse) protein is Protein LMBR1L (Lmbr1l).